Here is a 128-residue protein sequence, read N- to C-terminus: Large ribosomal subunit protein bL17 (128 aa).

Belongs to the bacterial ribosomal protein bL17 family. In terms of assembly, part of the 50S ribosomal subunit. Contacts protein L32.

The polypeptide is Large ribosomal subunit protein bL17 (Pseudomonas syringae pv. tomato (strain ATCC BAA-871 / DC3000)).